The primary structure comprises 452 residues: 51.5 kDa protein (452 aa).

The 126-residue stretch at 1-126 (MIQSPPGSGK…KDTYDYMIEG (126 aa)) folds into the Helicase ATP-binding domain. A Helicase C-terminal domain is found at 177 to 333 (DVVQEYVKHA…NIVQAKQCPD (157 aa)). A zinc finger lies at 331-348 (CPDCSAMWPLSQKMCNLC).

Its function is as follows. May play a role in either regulating bacteriophages replication or specifying expression of its own genes. This chain is 51.5 kDa protein, found in Lactococcus (lactic streptococci).